Here is a 74-residue protein sequence, read N- to C-terminus: Conotoxin Im6.10 (74 aa).

Positions 1-19 are cleaved as a signal peptide; it reads MKTGMIICLLLIAFMDADG. The propeptide occupies 20–47; the sequence is SPGDTLYSQKTADTDSGMKRFQKTFQKR. Disulfide bonds link Cys49-Cys58, Cys52-Cys63, and Cys57-Cys73.

In terms of tissue distribution, expressed by the venom duct.

It localises to the secreted. In terms of biological role, probable neurotoxin. In Conus imperialis (Imperial cone), this protein is Conotoxin Im6.10.